A 212-amino-acid chain; its full sequence is Tetraspanin-31-B (212 aa).

The Cytoplasmic portion of the chain corresponds to 1 to 12; sequence MVCGGFTCSKNA. A helical transmembrane segment spans residues 13–33; it reads LCALNVVYMLVGVLLIIVAAW. Over 34-44 the chain is Extracellular; sequence GKGFGIVSSIH. A helical membrane pass occupies residues 45 to 65; the sequence is IIGGVIAIGVFLLLIAIIGLI. At 66-72 the chain is on the cytoplasmic side; it reads GAVSHHQ. A helical membrane pass occupies residues 73–93; it reads VMLFIYMVVLILVFIFQFIVS. Residues 94 to 175 lie on the Extracellular side of the membrane; sequence CSCLAMNRSQ…MLNHADEALK (82 aa). N-linked (GlcNAc...) asparagine glycans are attached at residues Asn-100, Asn-109, Asn-117, and Asn-134. The helical transmembrane segment at 176-196 threads the bilayer; it reads ILGGVGLFFSFTEILGVWLAF. The Cytoplasmic segment spans residues 197–212; the sequence is RYRNQKDPRANPSAFL.

It belongs to the tetraspanin (TM4SF) family.

Its subcellular location is the membrane. This Xenopus laevis (African clawed frog) protein is Tetraspanin-31-B (tspan31-b).